We begin with the raw amino-acid sequence, 307 residues long: Cytochrome c1 2, heme protein, mitochondrial (307 aa).

A mitochondrion-targeting transit peptide spans 1-64 (MVGGGVIRQL…LLSFSTVASA (64 aa)). At 65–270 (DEAEHGLECP…EPEMEERKLM (206 aa)) the chain is on the mitochondrial intermembrane side. Residues 90 to 197 (ASIRRGHQVY…NGQNYVFALL (108 aa)) form the Cytochrome c domain. Heme c is bound by residues C103, C106, H107, and M226. Residues 271–288 (GFKWIFLLSLALLQAAYY) form a helical membrane-spanning segment. The Mitochondrial matrix portion of the chain corresponds to 289-307 (RRLKWSVLKSRKLVLDVVN).

It belongs to the cytochrome c family. Component of the ubiquinol-cytochrome c oxidoreductase (cytochrome b-c1 complex, complex III, CIII), a multisubunit enzyme composed of 10 subunits. The complex is composed of 3 respiratory subunits cytochrome b (MT-CYB), cytochrome c1 (CYC1-1 or CYC1-2) and Rieske protein (UCR1-1 or UCR1-2), 2 core protein subunits MPPalpha1 (or MPPalpha2) and MPPB, and 5 low-molecular weight protein subunits QCR7-1 (or QCR7-2), UCRQ-1 (or UCRQ-2), QCR9, UCRY and probably QCR6-1 (or QCR6-2). The complex exists as an obligatory dimer and forms supercomplexes (SCs) in the inner mitochondrial membrane with NADH-ubiquinone oxidoreductase (complex I, CI), resulting in different assemblies (supercomplexes SCI(1)III(2) and SCI(2)III(4)). Binds 1 heme c group covalently per subunit.

It is found in the mitochondrion inner membrane. Its function is as follows. Component of the ubiquinol-cytochrome c oxidoreductase, a multisubunit transmembrane complex that is part of the mitochondrial electron transport chain which drives oxidative phosphorylation. The respiratory chain contains 3 multisubunit complexes succinate dehydrogenase (complex II, CII), ubiquinol-cytochrome c oxidoreductase (cytochrome b-c1 complex, complex III, CIII) and cytochrome c oxidase (complex IV, CIV), that cooperate to transfer electrons derived from NADH and succinate to molecular oxygen, creating an electrochemical gradient over the inner membrane that drives transmembrane transport and the ATP synthase. The cytochrome b-c1 complex catalyzes electron transfer from ubiquinol to cytochrome c, linking this redox reaction to translocation of protons across the mitochondrial inner membrane, with protons being carried across the membrane as hydrogens on the quinol. In the process called Q cycle, 2 protons are consumed from the matrix, 4 protons are released into the intermembrane space and 2 electrons are passed to cytochrome c. Cytochrome c1 is a catalytic core subunit containing a c-type heme. It transfers electrons from the [2Fe-2S] iron-sulfur cluster of the Rieske protein to cytochrome c. The polypeptide is Cytochrome c1 2, heme protein, mitochondrial (CYC1-2) (Arabidopsis thaliana (Mouse-ear cress)).